A 327-amino-acid chain; its full sequence is Olfactory receptor 9G4 (327 aa).

Topologically, residues 1–43 (MIFPSHDSQAFTSVDMEVGNCTILTEFILLGFSADSQWQPILF) are extracellular. A glycan (N-linked (GlcNAc...) asparagine) is linked at N20. Residues 44–64 (GVFLMLYLITLSGNMTLVILI) form a helical membrane-spanning segment. Residues 65–71 (RTDSHLH) are Cytoplasmic-facing. A helical membrane pass occupies residues 72-92 (TPMYFFIGNLSFLDFWYTSVY). The Extracellular segment spans residues 93 to 113 (TPKILASCVSEDKRISLAGCG). A disulfide bridge connects residues C112 and C194. A helical transmembrane segment spans residues 114-134 (AQLFFSCVVAYTECYLLAAMA). Over 135 to 152 (YDRHAAICNPLLYSGTMS) the chain is Cytoplasmic. A helical transmembrane segment spans residues 153-173 (TALCTGLVAGSYIGGFLNAIA). Topologically, residues 174–212 (HTANTFRLHFCGKNIIDHFFCDAPPLVKMSCTNTRVYEK) are extracellular. The helical transmembrane segment at 213-233 (VLLGVVGFTVLSSILAILISY) threads the bilayer. At 234–252 (VNILLAILRIHSASGRHKA) the chain is on the cytoplasmic side. The helical transmembrane segment at 253–273 (FSTCASHLISVMLFYGSLLFM) threads the bilayer. Residues 274-286 (YSRPSSTYSLERD) are Extracellular-facing. Residues 287-307 (KVAALFYTVINPLLNPLIYSL) traverse the membrane as a helical segment. At 308–327 (RNKDIKEAFRKATQTIQPQT) the chain is on the cytoplasmic side.

The protein belongs to the G-protein coupled receptor 1 family.

The protein resides in the cell membrane. In terms of biological role, odorant receptor. This chain is Olfactory receptor 9G4 (OR9G4), found in Homo sapiens (Human).